A 425-amino-acid chain; its full sequence is Formyl-CoA:oxalate CoA-transferase (425 aa).

CoA contacts are provided by residues 17–18, arginine 38, 72–75, 96–98, arginine 104, and 136–139; these read QS, LDTK, NFG, and KVYE. The active-site Nucleophile is aspartate 168. 247 to 249 serves as a coordination point for substrate; that stretch reads GGQ.

Belongs to the CoA-transferase III family. Frc subfamily. Homodimer.

The enzyme catalyses formyl-CoA + oxalate = oxalyl-CoA + formate. Its pathway is metabolic intermediate degradation; oxalate degradation; CO(2) and formate from oxalate: step 1/2. Functionally, involved in the catabolism of oxalate and in the adapatation to low pH via the induction of the oxalate-dependent acid tolerance response (ATR). Catalyzes the transfer of the CoA moiety from formyl-CoA to oxalate. This is Formyl-CoA:oxalate CoA-transferase from Rhodopseudomonas palustris (strain ATCC BAA-98 / CGA009).